A 201-amino-acid chain; its full sequence is Dephospho-CoA kinase (201 aa).

A DPCK domain is found at 4-201 (VIGLTGGIAS…LLDTWSNIEK (198 aa)). Residue 12 to 17 (ASGKST) coordinates ATP.

It belongs to the CoaE family.

The protein resides in the cytoplasm. It catalyses the reaction 3'-dephospho-CoA + ATP = ADP + CoA + H(+). The protein operates within cofactor biosynthesis; coenzyme A biosynthesis; CoA from (R)-pantothenate: step 5/5. Catalyzes the phosphorylation of the 3'-hydroxyl group of dephosphocoenzyme A to form coenzyme A. This is Dephospho-CoA kinase from Bacillus licheniformis (strain ATCC 14580 / DSM 13 / JCM 2505 / CCUG 7422 / NBRC 12200 / NCIMB 9375 / NCTC 10341 / NRRL NRS-1264 / Gibson 46).